The chain runs to 333 residues: EP300-interacting inhibitor of differentiation 3 (333 aa).

The protein belongs to the NSE4 family. As to quaternary structure, component of the SMC5-SMC6 complex which consists at least of SMC5, SMC6, NSMCE2, NSMCE1, NSMCE4A or EID3 and NSMCE3; EID3 seems to be a testis-specific subunit. NSMCE1, NSMCE4A or EID3 and NSMCE3 probably form a subcomplex that bridges the head domains of the SMC5:SMC6 heterodimer. Homodimer, and heterodimer with EID2. Interacts with the C-terminal region of CREBBP. As to expression, highly expressed in testis.

The protein localises to the nucleus. It localises to the cytoplasm. It is found in the chromosome. Its subcellular location is the telomere. In terms of biological role, tissue-specific component of the SMC5-SMC6 complex, a complex involved in repair of DNA double-strand breaks by homologous recombination. The complex may promote sister chromatid homologous recombination by recruiting the SMC1-SMC3 cohesin complex to double-strand breaks. The complex is required for telomere maintenance via recombination and mediates sumoylation of shelterin complex (telosome) components. Acts as a repressor of nuclear receptor-dependent transcription possibly by interfering with CREBBP-dependent coactivation. May function as a coinhibitor of other CREBBP/EP300-dependent transcription factors. The chain is EP300-interacting inhibitor of differentiation 3 from Homo sapiens (Human).